We begin with the raw amino-acid sequence, 184 residues long: GTP cyclohydrolase 1 (184 aa).

Cysteine 75, histidine 78, and cysteine 146 together coordinate Zn(2+).

It belongs to the GTP cyclohydrolase I family. Homomer.

The catalysed reaction is GTP + H2O = 7,8-dihydroneopterin 3'-triphosphate + formate + H(+). The protein operates within cofactor biosynthesis; 7,8-dihydroneopterin triphosphate biosynthesis; 7,8-dihydroneopterin triphosphate from GTP: step 1/1. The chain is GTP cyclohydrolase 1 from Streptococcus pneumoniae (strain ATCC 700669 / Spain 23F-1).